Reading from the N-terminus, the 208-residue chain is Protein GrpE (208 aa).

Residues 1 to 12 (MTNKDESVEKNT) are compositionally biased toward basic and acidic residues. Residues 1–49 (MTNKDESVEKNTESTVEVTNVKQNIDDSVEQTEESKGHLQDEAIEETSD) form a disordered region. Over residues 13 to 23 (ESTVEVTNVKQ) the composition is skewed to polar residues.

This sequence belongs to the GrpE family. In terms of assembly, homodimer.

Its subcellular location is the cytoplasm. Functionally, participates actively in the response to hyperosmotic and heat shock by preventing the aggregation of stress-denatured proteins, in association with DnaK and GrpE. It is the nucleotide exchange factor for DnaK and may function as a thermosensor. Unfolded proteins bind initially to DnaJ; upon interaction with the DnaJ-bound protein, DnaK hydrolyzes its bound ATP, resulting in the formation of a stable complex. GrpE releases ADP from DnaK; ATP binding to DnaK triggers the release of the substrate protein, thus completing the reaction cycle. Several rounds of ATP-dependent interactions between DnaJ, DnaK and GrpE are required for fully efficient folding. The polypeptide is Protein GrpE (Staphylococcus aureus (strain bovine RF122 / ET3-1)).